The following is a 77-amino-acid chain: UPF0401 protein UTI89_C4989 (77 aa).

It belongs to the UPF0401 family.

This Escherichia coli (strain UTI89 / UPEC) protein is UPF0401 protein UTI89_C4989.